Reading from the N-terminus, the 239-residue chain is Serine protease SplF (239 aa).

The N-terminal stretch at 1–36 (MNKNIIIKSIAALTILTSVTGVGTTMVEGIQQTAKA) is a signal peptide. Active-site charge relay system residues include His75, Asp114, and Ser192.

The protein belongs to the peptidase S1B family.

The protein localises to the secreted. The sequence is that of Serine protease SplF (splF) from Staphylococcus aureus (strain Mu50 / ATCC 700699).